Reading from the N-terminus, the 257-residue chain is Ubiquinone biosynthesis O-methyltransferase (257 aa).

S-adenosyl-L-methionine contacts are provided by Arg-43, Gly-77, Asp-98, and Met-144.

This sequence belongs to the methyltransferase superfamily. UbiG/COQ3 family.

The catalysed reaction is a 3-demethylubiquinol + S-adenosyl-L-methionine = a ubiquinol + S-adenosyl-L-homocysteine + H(+). It carries out the reaction a 3-(all-trans-polyprenyl)benzene-1,2-diol + S-adenosyl-L-methionine = a 2-methoxy-6-(all-trans-polyprenyl)phenol + S-adenosyl-L-homocysteine + H(+). Its pathway is cofactor biosynthesis; ubiquinone biosynthesis. Functionally, O-methyltransferase that catalyzes the 2 O-methylation steps in the ubiquinone biosynthetic pathway. This is Ubiquinone biosynthesis O-methyltransferase from Psychrobacter arcticus (strain DSM 17307 / VKM B-2377 / 273-4).